The chain runs to 113 residues: Large ribosomal subunit protein uL22 (113 aa).

The protein belongs to the universal ribosomal protein uL22 family. Part of the 50S ribosomal subunit.

In terms of biological role, this protein binds specifically to 23S rRNA; its binding is stimulated by other ribosomal proteins, e.g. L4, L17, and L20. It is important during the early stages of 50S assembly. It makes multiple contacts with different domains of the 23S rRNA in the assembled 50S subunit and ribosome. Its function is as follows. The globular domain of the protein is located near the polypeptide exit tunnel on the outside of the subunit, while an extended beta-hairpin is found that lines the wall of the exit tunnel in the center of the 70S ribosome. The protein is Large ribosomal subunit protein uL22 of Geobacillus stearothermophilus (Bacillus stearothermophilus).